The primary structure comprises 599 residues: MTTQVPPSALLPLNPEQLARLQAATTDLTPTQLAWVSGYFWGVLNQQPVALAVTPAPAAEMPGITIISASQTGNARRVAEALRDDLLAAKLNVKLVNAGDYKFKQIASEKLLIVVTSTQGEGEPPEEAVALHKFLFSKKAPKLENTAFAVFSLGDSSYEFFCQSGKDFDSKLAELGGERLLDRVDSDVEYQAAASEWRARVVDALKSRAPVAAPSQSVATGAVNEIHTSPYSKDAPLVASLSVNQKITGRNSEKDVRHIEIDLGDSGLRYQPGDALGVWYQNDPALVKELVELLWLTGDEPVTVEGKTLPLNEALQWHFELTVNTANIVENYATLTRSETLLPLVGDKAKLQHYAATTLIVDMVRFSPAQLDAEALINLLRPLTPRLYSIASSQAEVENEVHVTVGVVRYDVEGRARAGGASSFLADRVEEEGEVRVFIEHNDNFRLPANLETPVIMIGPGTGIAPFRAFMQQRAADEAPGKNWLFFGNPHFTEDFLYQVEWQRYVKEGVLTRIDLAWSRDQKEKVYVQDKLREQGAELWRWINDGAHIYVCGDANRMAKDVEQALLEVIAEFGGMDTEAADEFLSELRVERRYQRDVY.

A Flavodoxin-like domain is found at 64–202 (ITIISASQTG…AASEWRARVV (139 aa)). Residues 70-75 (SQTGNA), 117-120 (STQG), and 153-162 (LGDSSYEFFC) contribute to the FMN site. In terms of domain architecture, FAD-binding FR-type spans 234 to 448 (DAPLVASLSV…IEHNDNFRLP (215 aa)). Residues Thr-322, Ala-356, 386-389 (RLYS), 404-406 (TVG), Tyr-410, and 419-422 (GGAS) each bind FAD. NADP(+)-binding positions include 519 to 520 (SR), 525 to 529 (KVYVQ), and Asp-561. Residue Tyr-599 coordinates FAD.

Belongs to the NADPH-dependent sulphite reductase flavoprotein subunit CysJ family. The protein in the N-terminal section; belongs to the flavodoxin family. This sequence in the C-terminal section; belongs to the flavoprotein pyridine nucleotide cytochrome reductase family. Alpha(8)-beta(8). The alpha component is a flavoprotein, the beta component is a hemoprotein. FAD serves as cofactor. The cofactor is FMN.

The enzyme catalyses hydrogen sulfide + 3 NADP(+) + 3 H2O = sulfite + 3 NADPH + 4 H(+). Its pathway is sulfur metabolism; hydrogen sulfide biosynthesis; hydrogen sulfide from sulfite (NADPH route): step 1/1. In terms of biological role, component of the sulfite reductase complex that catalyzes the 6-electron reduction of sulfite to sulfide. This is one of several activities required for the biosynthesis of L-cysteine from sulfate. The flavoprotein component catalyzes the electron flow from NADPH -&gt; FAD -&gt; FMN to the hemoprotein component. The polypeptide is Sulfite reductase [NADPH] flavoprotein alpha-component (Shigella flexneri serotype 5b (strain 8401)).